We begin with the raw amino-acid sequence, 252 residues long: Triosephosphate isomerase (252 aa).

10-12 provides a ligand contact to substrate; the sequence is NWK. His96 serves as the catalytic Electrophile. Residue Glu168 is the Proton acceptor of the active site. Residues Gly174, Ser214, and 235–236 contribute to the substrate site; that span reads GG.

Belongs to the triosephosphate isomerase family. As to quaternary structure, homodimer.

It is found in the cytoplasm. It catalyses the reaction D-glyceraldehyde 3-phosphate = dihydroxyacetone phosphate. It participates in carbohydrate biosynthesis; gluconeogenesis. The protein operates within carbohydrate degradation; glycolysis; D-glyceraldehyde 3-phosphate from glycerone phosphate: step 1/1. Functionally, involved in the gluconeogenesis. Catalyzes stereospecifically the conversion of dihydroxyacetone phosphate (DHAP) to D-glyceraldehyde-3-phosphate (G3P). The sequence is that of Triosephosphate isomerase from Streptococcus pyogenes serotype M6 (strain ATCC BAA-946 / MGAS10394).